Reading from the N-terminus, the 486-residue chain is Cardiolipin synthase A (486 aa).

Transmembrane regions (helical) follow at residues 3-23 (TVYT…IAGV) and 38-58 (MAWL…YLAV). PLD phosphodiesterase domains lie at 219–246 (MDLR…VDPR) and 399–426 (EGGL…DMRS). Active-site residues include H224, K226, D231, H404, K406, and D411.

This sequence belongs to the phospholipase D family. Cardiolipin synthase subfamily. ClsA sub-subfamily.

The protein localises to the cell inner membrane. It carries out the reaction 2 a 1,2-diacyl-sn-glycero-3-phospho-(1'-sn-glycerol) = a cardiolipin + glycerol. Its function is as follows. Catalyzes the reversible phosphatidyl group transfer from one phosphatidylglycerol molecule to another to form cardiolipin (CL) (diphosphatidylglycerol) and glycerol. The chain is Cardiolipin synthase A from Shigella boydii serotype 4 (strain Sb227).